A 194-amino-acid chain; its full sequence is Holliday junction branch migration complex subunit RuvA (194 aa).

Positions 1 to 61 (MIASLSGLLE…EDSVSLYGFA (61 aa)) are domain I. The domain II stretch occupies residues 62–136 (SVLECTVFEQ…GKLTSVPLEN (75 aa)). The interval 136-140 (NRKQE) is flexible linker. Residues 141 to 194 (QAVDRSAEIVQALIGLGWQRQESAAAVESVLEKDQSLTMPEILRNALRYLAKQE) are domain III.

It belongs to the RuvA family. In terms of assembly, homotetramer. Forms an RuvA(8)-RuvB(12)-Holliday junction (HJ) complex. HJ DNA is sandwiched between 2 RuvA tetramers; dsDNA enters through RuvA and exits via RuvB. An RuvB hexamer assembles on each DNA strand where it exits the tetramer. Each RuvB hexamer is contacted by two RuvA subunits (via domain III) on 2 adjacent RuvB subunits; this complex drives branch migration. In the full resolvosome a probable DNA-RuvA(4)-RuvB(12)-RuvC(2) complex forms which resolves the HJ.

The protein localises to the cytoplasm. Its function is as follows. The RuvA-RuvB-RuvC complex processes Holliday junction (HJ) DNA during genetic recombination and DNA repair, while the RuvA-RuvB complex plays an important role in the rescue of blocked DNA replication forks via replication fork reversal (RFR). RuvA specifically binds to HJ cruciform DNA, conferring on it an open structure. The RuvB hexamer acts as an ATP-dependent pump, pulling dsDNA into and through the RuvAB complex. HJ branch migration allows RuvC to scan DNA until it finds its consensus sequence, where it cleaves and resolves the cruciform DNA. This chain is Holliday junction branch migration complex subunit RuvA, found in Tropheryma whipplei (strain Twist) (Whipple's bacillus).